A 236-amino-acid chain; its full sequence is Ubiquinone biosynthesis O-methyltransferase (236 aa).

Residues Arg-39, Gly-59, Asp-80, and Met-124 each contribute to the S-adenosyl-L-methionine site.

It belongs to the methyltransferase superfamily. UbiG/COQ3 family.

The enzyme catalyses a 3-demethylubiquinol + S-adenosyl-L-methionine = a ubiquinol + S-adenosyl-L-homocysteine + H(+). It catalyses the reaction a 3-(all-trans-polyprenyl)benzene-1,2-diol + S-adenosyl-L-methionine = a 2-methoxy-6-(all-trans-polyprenyl)phenol + S-adenosyl-L-homocysteine + H(+). It functions in the pathway cofactor biosynthesis; ubiquinone biosynthesis. O-methyltransferase that catalyzes the 2 O-methylation steps in the ubiquinone biosynthetic pathway. This chain is Ubiquinone biosynthesis O-methyltransferase, found in Shewanella pealeana (strain ATCC 700345 / ANG-SQ1).